Consider the following 292-residue polypeptide: 4-hydroxy-tetrahydrodipicolinate synthase (292 aa).

T45 is a binding site for pyruvate. Y134 acts as the Proton donor/acceptor in catalysis. The active-site Schiff-base intermediate with substrate is the K162. Residue V204 participates in pyruvate binding.

The protein belongs to the DapA family. Homotetramer; dimer of dimers.

It localises to the cytoplasm. It carries out the reaction L-aspartate 4-semialdehyde + pyruvate = (2S,4S)-4-hydroxy-2,3,4,5-tetrahydrodipicolinate + H2O + H(+). Its pathway is amino-acid biosynthesis; L-lysine biosynthesis via DAP pathway; (S)-tetrahydrodipicolinate from L-aspartate: step 3/4. Catalyzes the condensation of (S)-aspartate-beta-semialdehyde [(S)-ASA] and pyruvate to 4-hydroxy-tetrahydrodipicolinate (HTPA). The sequence is that of 4-hydroxy-tetrahydrodipicolinate synthase from Marinobacter nauticus (strain ATCC 700491 / DSM 11845 / VT8) (Marinobacter aquaeolei).